The following is a 258-amino-acid chain: Synapse differentiation-inducing gene protein 1 (258 aa).

At 1–181 the chain is on the cytoplasmic side; it reads MAGVVEQKSG…NFLVMPPRDH (181 aa). Phosphoserine is present on S137. A helical transmembrane segment spans residues 182–202; it reads LGLSVFSMLCCFWPLGIAAFY. Topologically, residues 203–228 are extracellular; it reads LSHETNKAVAKGDFHQASTSSRRALF. The helical intramembrane region spans 229–249; that stretch reads LAVLSITIGTGIYVGVAVALI. At 250–258 the chain is on the extracellular side; it reads AYLSKSNHL.

Belongs to the CD225/Dispanin family. In terms of assembly, homodimer. Interacts with GRIA1 and GRIA2.

The protein resides in the cell membrane. It localises to the early endosome membrane. The protein localises to the postsynaptic density membrane. Its subcellular location is the synapse. It is found in the cell projection. The protein resides in the dendrite. It localises to the dendritic spine. Functionally, may regulate AMPA receptor content at nascent synapses, and have a role in postsynaptic development and maturation. The polypeptide is Synapse differentiation-inducing gene protein 1 (SYNDIG1) (Bos taurus (Bovine)).